We begin with the raw amino-acid sequence, 286 residues long: ATP synthase gamma chain (286 aa).

Belongs to the ATPase gamma chain family. As to quaternary structure, F-type ATPases have 2 components, CF(1) - the catalytic core - and CF(0) - the membrane proton channel. CF(1) has five subunits: alpha(3), beta(3), gamma(1), delta(1), epsilon(1). CF(0) has three main subunits: a, b and c.

It is found in the cell inner membrane. Its function is as follows. Produces ATP from ADP in the presence of a proton gradient across the membrane. The gamma chain is believed to be important in regulating ATPase activity and the flow of protons through the CF(0) complex. The chain is ATP synthase gamma chain from Pseudomonas fluorescens (strain Pf0-1).